Reading from the N-terminus, the 159-residue chain is Probable minor fimbrial protein (159 aa).

A propeptide spans 1–6 (MKKMHG) (leader sequence). N-methylphenylalanine is present on Phe7. A helical membrane pass occupies residues 7–27 (FTLIELMIVVAIIGVLASTAL). 2 disulfide bridges follow: Cys56/Cys71 and Cys140/Cys153.

Belongs to the N-Me-Phe pilin family. In terms of assembly, the pili are polar flexible filaments of about 5.4 nanometers diameter and 2.5 micrometers average length; they consist of only a single polypeptide chain arranged in a helical configuration of five subunits per turn in the assembled pilus.

It localises to the fimbrium. The protein resides in the membrane. This chain is Probable minor fimbrial protein (fimZ), found in Dichelobacter nodosus (Bacteroides nodosus).